Reading from the N-terminus, the 248-residue chain is MDTRKRGRPEAGSFNSNGGGYKKSKQEMESYSTGLGSKSKPCTKFFSTSGCPFGENCHFLHYVPGGYNAVSQMTNMGPPIPQVSRNMQGSGNGGRFSGRGESGPGHVSNFGDSATARFSVDASLAGAIIGKGGVSSKQICRQTGVKLSIQDHERDPNLKNIVLEGTLEQISEASAMVKDLIGRLNSAAKKPPGGGLGGGGGMGSEGKPHPGSNFKTKICERFSKGNCTFGDRCHFAHGEAELRKSGIV.

2 disordered regions span residues 1 to 37 (MDTRKRGRPEAGSFNSNGGGYKKSKQEMESYSTGLGS) and 87 to 110 (MQGSGNGGRFSGRGESGPGHVSNF). The C3H1-type 1 zinc-finger motif lies at 36 to 64 (GSKSKPCTKFFSTSGCPFGENCHFLHYVP). Gly residues predominate over residues 90-103 (SGNGGRFSGRGESG). The region spanning 113-177 (SATARFSVDA…EQISEASAMV (65 aa)) is the KH domain. The tract at residues 188-209 (AKKPPGGGLGGGGGMGSEGKPH) is disordered. The span at 192 to 204 (PGGGLGGGGGMGS) shows a compositional bias: gly residues. The C3H1-type 2 zinc finger occupies 213 to 240 (NFKTKICERFSKGNCTFGDRCHFAHGEA).

This is Zinc finger CCCH domain-containing protein 36 from Arabidopsis thaliana (Mouse-ear cress).